The sequence spans 300 residues: Ribosomal RNA small subunit methyltransferase H (300 aa).

Residues 46–48 (GGH), Asp65, Phe92, Asp107, and Gln114 contribute to the S-adenosyl-L-methionine site.

Belongs to the methyltransferase superfamily. RsmH family.

Its subcellular location is the cytoplasm. The enzyme catalyses cytidine(1402) in 16S rRNA + S-adenosyl-L-methionine = N(4)-methylcytidine(1402) in 16S rRNA + S-adenosyl-L-homocysteine + H(+). In terms of biological role, specifically methylates the N4 position of cytidine in position 1402 (C1402) of 16S rRNA. This is Ribosomal RNA small subunit methyltransferase H from Prochlorococcus marinus (strain MIT 9312).